Reading from the N-terminus, the 141-residue chain is Small ribosomal subunit protein uS8c (141 aa).

It belongs to the universal ribosomal protein uS8 family. As to quaternary structure, part of the 30S ribosomal subunit.

It localises to the plastid. The protein resides in the chloroplast. In terms of biological role, one of the primary rRNA binding proteins, it binds directly to 16S rRNA central domain where it helps coordinate assembly of the platform of the 30S subunit. This is Small ribosomal subunit protein uS8c (rps8) from Chlamydomonas reinhardtii (Chlamydomonas smithii).